The primary structure comprises 139 residues: D-ribose pyranase (139 aa).

H20 (proton donor) is an active-site residue. Residues D28, H106, and 128 to 130 (YAN) each bind substrate.

It belongs to the RbsD / FucU family. RbsD subfamily. As to quaternary structure, homodecamer.

Its subcellular location is the cytoplasm. The catalysed reaction is beta-D-ribopyranose = beta-D-ribofuranose. It participates in carbohydrate metabolism; D-ribose degradation; D-ribose 5-phosphate from beta-D-ribopyranose: step 1/2. Its function is as follows. Catalyzes the interconversion of beta-pyran and beta-furan forms of D-ribose. This chain is D-ribose pyranase, found in Shewanella pealeana (strain ATCC 700345 / ANG-SQ1).